The sequence spans 433 residues: Ornithine decarboxylase 1B, chloroplastic (433 aa).

Lysine 96 is modified (N6-(pyridoxal phosphate)lysine). Residues serine 228, glycine 266, and glutamate 299–arginine 302 contribute to the pyridoxal 5'-phosphate site. Residue tyrosine 342–aspartate 343 coordinates substrate. Catalysis depends on cysteine 378, which acts as the Proton donor; shared with dimeric partner. Aspartate 379 lines the substrate pocket. Tyrosine 407 is a binding site for pyridoxal 5'-phosphate.

It belongs to the Orn/Lys/Arg decarboxylase class-II family. Homodimer. Only the dimer is catalytically active, as the active sites are constructed of residues from both monomers. Pyridoxal 5'-phosphate is required as a cofactor.

The protein resides in the plastid. It is found in the chloroplast. The enzyme catalyses L-ornithine + H(+) = putrescine + CO2. The protein operates within alkaloid biosynthesis; nicotine biosynthesis. It functions in the pathway amine and polyamine biosynthesis; putrescine biosynthesis via L-ornithine pathway; putrescine from L-ornithine: step 1/1. Its function is as follows. Involved in the biosynthesis of pyridine alkaloid natural products, leading mainly to the production of anabasine, anatabine, nicotine and nornicotine, effective deterrents against herbivores with antiparasitic and pesticide properties (neurotoxins); nornicotine serves as the precursor in the synthesis of the carcinogen compound N'-nitrosonornicotine (NNN). Catalyzes the first and rate-limiting step of polyamine biosynthesis that converts ornithine into putrescine, which is the precursor for the polyamines, spermidine and spermine. Polyamines are essential for cell proliferation and are implicated in cellular processes, ranging from DNA replication to apoptosis. This is Ornithine decarboxylase 1B, chloroplastic from Nicotiana tabacum (Common tobacco).